The chain runs to 893 residues: UPF0182 protein CLD_0809 (893 aa).

7 helical membrane-spanning segments follow: residues 9-29 (IPLF…NFII), 49-69 (AIII…WMYY), 94-114 (LFFI…SSSY), 154-174 (VIIS…FILE), 202-222 (LAIV…IKIW), 246-266 (FYKI…LSIV), and 273-293 (VSIC…ASFL).

The protein belongs to the UPF0182 family.

The protein resides in the cell membrane. This is UPF0182 protein CLD_0809 from Clostridium botulinum (strain Okra / Type B1).